The chain runs to 219 residues: Protein-methionine-sulfoxide reductase heme-binding subunit MsrQ (219 aa).

The next 5 membrane-spanning stretches (helical) occupy residues 17–37 (AKPL…YAAW), 88–108 (LFAY…DMGF), 121–141 (PFIL…ATSF), 153–173 (WQLL…HFFW), and 184–204 (VFVY…NHWA).

The protein belongs to the MsrQ family. Heterodimer of a catalytic subunit (MsrP) and a heme-binding subunit (MsrQ). FMN is required as a cofactor. The cofactor is heme b.

It localises to the cell inner membrane. Its function is as follows. Part of the MsrPQ system that repairs oxidized periplasmic proteins containing methionine sulfoxide residues (Met-O), using respiratory chain electrons. Thus protects these proteins from oxidative-stress damage caused by reactive species of oxygen and chlorine generated by the host defense mechanisms. MsrPQ is essential for the maintenance of envelope integrity under bleach stress, rescuing a wide series of structurally unrelated periplasmic proteins from methionine oxidation. MsrQ provides electrons for reduction to the reductase catalytic subunit MsrP, using the quinone pool of the respiratory chain. The polypeptide is Protein-methionine-sulfoxide reductase heme-binding subunit MsrQ (Polaromonas naphthalenivorans (strain CJ2)).